Here is a 37-residue protein sequence, read N- to C-terminus: Large ribosomal subunit protein bL36 (37 aa).

This sequence belongs to the bacterial ribosomal protein bL36 family.

This Brevibacillus brevis (strain 47 / JCM 6285 / NBRC 100599) protein is Large ribosomal subunit protein bL36.